A 371-amino-acid chain; its full sequence is Opsin Rh1 (371 aa).

Over 1-47 (MERYSTPLIGPSFAALTNGSVTDKVTPDMAHLVHPYWNQFPAMEPKW) the chain is Extracellular. An N-linked (GlcNAc...) asparagine glycan is attached at N18. A helical membrane pass occupies residues 48–72 (AKFLAAYMVLIATISWCGNGVVIYI). Topologically, residues 73-84 (FSTTKSLRTPAN) are cytoplasmic. A helical transmembrane segment spans residues 85–110 (LLVINLAISDFGIMITNTPMMGINLF). Residues 111–124 (YETWVLGPLMCDIY) are Extracellular-facing. Cysteines 121 and 198 form a disulfide. The helical transmembrane segment at 125 to 144 (GGLGSAFGCSSILSMCMISL) threads the bilayer. The Cytoplasmic portion of the chain corresponds to 145–163 (DRYNVIVKGMAGQPMTIKL). Residues 164-187 (AIMKIALIWFMASIWTLAPVFGWS) form a helical membrane-spanning segment. The Extracellular segment spans residues 188-211 (RYVPEGNLTSCGIDYLERDWNPRS). Residues 212–239 (YLIFYSIFVYYLPLFLICYSYWFIIAAV) form a helical membrane-spanning segment. Over 240–274 (SAHEKAMREQAKKMNVKSLRSSEDADKSAEGKLAK) the chain is Cytoplasmic. Residues 275-298 (VALVTISLWFMAWTPYTIINTLGL) traverse the membrane as a helical segment. The Extracellular segment spans residues 299 to 305 (FKYEGLT). A helical transmembrane segment spans residues 306-330 (PLNTIWGACFAKSAACYNPIVYGIS). An N6-(retinylidene)lysine modification is found at K317. Topologically, residues 331 to 371 (HPKYGIALKEKCPCCVFGKVDDGKASDATSQATNNESETKA) are cytoplasmic.

It belongs to the G-protein coupled receptor 1 family. Opsin subfamily. In terms of processing, phosphorylated on some or all of the serine and threonine residues present in the C-terminal region.

It localises to the cell projection. It is found in the rhabdomere membrane. Its function is as follows. Visual pigments are the light-absorbing molecules that mediate vision. They consist of an apoprotein, opsin, covalently linked to cis-retinal. This is Opsin Rh1 (NINAE) from Calliphora vicina (Blue blowfly).